A 394-amino-acid chain; its full sequence is Elongation factor Tu 2 (394 aa).

Residues 10–204 (KPHVNVGTIG…ALDSYIPEPE (195 aa)) enclose the tr-type G domain. The segment at 19 to 26 (GHVDHGKT) is G1. 19–26 (GHVDHGKT) provides a ligand contact to GTP. T26 contacts Mg(2+). Positions 60-64 (GITIN) are G2. The interval 81 to 84 (DCPG) is G3. GTP contacts are provided by residues 81-85 (DCPGH) and 136-139 (NKCD). Positions 136–139 (NKCD) are G4. The interval 174–176 (SAL) is G5.

It belongs to the TRAFAC class translation factor GTPase superfamily. Classic translation factor GTPase family. EF-Tu/EF-1A subfamily. Monomer.

The protein localises to the cytoplasm. The catalysed reaction is GTP + H2O = GDP + phosphate + H(+). In terms of biological role, GTP hydrolase that promotes the GTP-dependent binding of aminoacyl-tRNA to the A-site of ribosomes during protein biosynthesis. This chain is Elongation factor Tu 2, found in Shewanella sp. (strain MR-4).